We begin with the raw amino-acid sequence, 469 residues long: 3-isopropylmalate dehydratase large subunit (469 aa).

[4Fe-4S] cluster is bound by residues Cys-347, Cys-407, and Cys-410.

It belongs to the aconitase/IPM isomerase family. LeuC type 1 subfamily. As to quaternary structure, heterodimer of LeuC and LeuD. Requires [4Fe-4S] cluster as cofactor.

The catalysed reaction is (2R,3S)-3-isopropylmalate = (2S)-2-isopropylmalate. The protein operates within amino-acid biosynthesis; L-leucine biosynthesis; L-leucine from 3-methyl-2-oxobutanoate: step 2/4. Catalyzes the isomerization between 2-isopropylmalate and 3-isopropylmalate, via the formation of 2-isopropylmaleate. This Sorangium cellulosum (strain So ce56) (Polyangium cellulosum (strain So ce56)) protein is 3-isopropylmalate dehydratase large subunit.